Here is a 930-residue protein sequence, read N- to C-terminus: Protein translocase subunit SecA (930 aa).

Residues glutamine 83, 101–105 (GEGKT), and aspartate 491 each bind ATP.

It belongs to the SecA family. Monomer and homodimer. Part of the essential Sec protein translocation apparatus which comprises SecA, SecYEG and auxiliary proteins SecDF. Other proteins may also be involved.

The protein localises to the cell inner membrane. The protein resides in the cellular thylakoid membrane. It is found in the cytoplasm. The enzyme catalyses ATP + H2O + cellular proteinSide 1 = ADP + phosphate + cellular proteinSide 2.. Part of the Sec protein translocase complex. Interacts with the SecYEG preprotein conducting channel. Has a central role in coupling the hydrolysis of ATP to the transfer of proteins into and across the cell membrane, serving as an ATP-driven molecular motor driving the stepwise translocation of polypeptide chains across the membrane. Functionally, probably participates in protein translocation into and across both the cytoplasmic and thylakoid membranes in cyanobacterial cells. The sequence is that of Protein translocase subunit SecA from Nostoc sp. (strain PCC 7120 / SAG 25.82 / UTEX 2576).